A 331-amino-acid polypeptide reads, in one-letter code: Major outer membrane protein P.IB (331 aa).

A signal peptide spans 1–19 (MKKSLIALTLAALPVAAMA).

It belongs to the Gram-negative porin family. In terms of assembly, homotrimer.

Its subcellular location is the cell outer membrane. Functionally, serves as a slightly cation selective porin. The protein is Major outer membrane protein P.IB (porB) of Neisseria meningitidis serogroup B.